Reading from the N-terminus, the 101-residue chain is opdI (101 aa).

The helical transmembrane segment at 30–49 (GGMGGALKIVFLGMMTYFIA) threads the bilayer. Residues 56–101 (SQHPPTDFNAPVQSVPQRAQRPSDTRLQGPVLLASNHPSGDSASPE) are disordered. Polar residues-rich tracts occupy residues 66–81 (PVQS…SDTR) and 91–101 (NHPSGDSASPE).

The protein localises to the membrane. In terms of biological role, part of the gene cluster that mediates the biosynthesis of oxopyrrolidines, polyketide-amino acid hybrid compounds with feature structures of tetramic acid. Does not seem to play a role in oxopyrrolidines A and B biosynthesis. The chain is opdI from Penicillium oxalicum (strain 114-2 / CGMCC 5302) (Penicillium decumbens).